The primary structure comprises 341 residues: Malate dehydrogenase 1, mitochondrial (341 aa).

Residues 1 to 22 (MFRSMLVRSSASAKQAVIRRSF) constitute a mitochondrion transit peptide. Residues 36–42 (GAAGGIG) and aspartate 62 contribute to the NAD(+) site. 2 residues coordinate substrate: arginine 109 and arginine 115. NAD(+) contacts are provided by residues asparagine 122 and 145–147 (ISN). Substrate contacts are provided by asparagine 147 and arginine 181. Histidine 205 (proton acceptor) is an active-site residue. Methionine 256 provides a ligand contact to NAD(+).

The protein belongs to the LDH/MDH superfamily. MDH type 1 family. Homodimer. Post-translationally, forms intramolecular disulfide bonds. Expressed in rosette leaves.

It localises to the mitochondrion matrix. The catalysed reaction is (S)-malate + NAD(+) = oxaloacetate + NADH + H(+). Negatively regulated by ATP. Not redox-regulated. The formation of intramolecular disulfide bonds does not alter enzymatic activity. Catalyzes a reversible NAD-dependent dehydrogenase reaction involved in central metabolism and redox homeostasis between organelle compartments. Required for carbon dioxide and energy partitioning in leaves. May limit photorespiration during the dark phase. Its activity is essential to shuttle reductants out from the mitochondria to support the photorespiratory flux. Can convert 2-oxoglutarate to (S)-2-hydroxyglutarate in vitro. The polypeptide is Malate dehydrogenase 1, mitochondrial (Arabidopsis thaliana (Mouse-ear cress)).